A 181-amino-acid polypeptide reads, in one-letter code: Mitochondrial inner membrane protein Mpv17 (181 aa).

The next 4 helical transmembrane spans lie at 20-37 (MCIA…AQYL), 51-67 (FSFL…FIWF), 86-103 (LCID…AILF), and 152-169 (VILN…LSYI).

Belongs to the peroxisomal membrane protein PXMP2/4 family.

It localises to the mitochondrion inner membrane. In terms of biological role, involved in mitochondria homeostasis. The chain is Mitochondrial inner membrane protein Mpv17 from Caenorhabditis elegans.